We begin with the raw amino-acid sequence, 106 residues long: CLAVATA3/ESR (CLE)-related protein 21 (106 aa).

A signal peptide spans 1–31 (MLILSSRYAMKRDVLIIVIFTVLVLIIISRS). The N-linked (GlcNAc...) asparagine glycan is linked to Asn47. A compositionally biased stretch (basic residues) spans 72–82 (KVRRRSSRFRR). Residues 72–106 (KVRRRSSRFRRKTDGDEEEEEKRSIPTGPNPLHNK) form a disordered region. A hydroxyproline mark is found at Pro97 and Pro100. The O-linked (Ara...) hydroxyproline glycan is linked to Pro100.

It belongs to the CLV3/ESR signal peptide family. The O-glycosylation (arabinosylation) of the hydroxyproline Pro-100 enhances binding affinity of the CLE21p peptide for its receptor. As to expression, mostly expressed in leaves and apex, and, to a lower extent, in seedlings, flowers, stems and siliques.

Its subcellular location is the secreted. The protein resides in the extracellular space. Extracellular signal peptide that regulates cell fate. Represses root apical meristem maintenance. Regulates the transition of protophloem cells from proliferation to differentiation, thus impinging on postembryonic growth capacity of the root meristem; this signaling pathway requires CRN and CLV2. The sequence is that of CLAVATA3/ESR (CLE)-related protein 21 from Arabidopsis thaliana (Mouse-ear cress).